A 525-amino-acid chain; its full sequence is MSPLNDLKINLNGQYTFFLNQNVISKYSGSLRKMIKQSKKKRNKKKRIITIEINDFPGGPDGFELVSRFCYHNGEILIDVSNVSTLYCCSVFLGMSEKFCFSNLFLQTEKFLEEVFYGSWSDIVSCLKNCEQVFFQADSYGLVDKLIFAALNKISQNSDDFSSSSLSSFASSLSPEMAKNTSESDGRYISRSVACGRSNEWWFEDMTNLSPKIILKLVMIIGAYKTNIKSLVLTRFLLHYLKTKLQTKSRTTTELMRNKLEYSDLADTAVRGVISAGTRTFSCRKLFWILRVLSSFSLSRESRIGLETLIGEMLEQATLDDLLISARGSRESGFYNVDLVIRLLKVFVKNREEEEEESRERNMKEIGKLIDKYLREISPDQNLKVPKFLGVAESLPDSARDCFDGVYRAIDIYLQSHPNLTPQDRTEICRCLNYKKLTMETCKQLARNPKIPPEIAIEALKSRCGNQEHTTSDVKVANKSFSCRYSEEKKKPVVLHLEITEKLAERLKTKGGYNLKVMDSFREGL.

Residues 5 to 79 enclose the BTB domain; it reads NDLKINLNGQ…CYHNGEILID (75 aa). The NPH3 domain maps to 200-466; the sequence is EWWFEDMTNL…IEALKSRCGN (267 aa).

Belongs to the NPH3 family.

Its pathway is protein modification; protein ubiquitination. Its function is as follows. May act as a substrate-specific adapter of an E3 ubiquitin-protein ligase complex (CUL3-RBX1-BTB) which mediates the ubiquitination and subsequent proteasomal degradation of target proteins. The protein is BTB/POZ domain-containing protein At1g50280 of Arabidopsis thaliana (Mouse-ear cress).